A 286-amino-acid chain; its full sequence is MEFKISGYTRLVGLLGYPVRHSLSPLMHNMAFQHLGLDYVYLVFEVKEDNLKEAVDAMKTLDVAGFNVTMPNKQKIIPLLDEISEEARLIGSVNTVVNKNGHLKGYNTDGKGYVMGLADEGISPEGKTIVIAGAGGASKSVAIQLALEGAKEITILNRTVEAAEEICNIINKNIPTCKTSATGYEDNELKQQLKEADLFINCTNLGMGSHEEKSIISSTDILHPDLIVSDVVYAPPKTKLLHMAEEVGCKTINGLGMIIGQGALAFKLWTGEDMPIEYIKRIILSK.

Shikimate is bound by residues 22-24 (SLS) and Thr69. The active-site Proton acceptor is the Lys73. Glu85 contributes to the NADP(+) binding site. Shikimate-binding residues include Asn94 and Asp109. Residues 133–137 (GAGGA) and Val231 contribute to the NADP(+) site. Tyr233 is a binding site for shikimate. An NADP(+)-binding site is contributed by Gly254.

It belongs to the shikimate dehydrogenase family. In terms of assembly, homodimer.

It catalyses the reaction shikimate + NADP(+) = 3-dehydroshikimate + NADPH + H(+). Its pathway is metabolic intermediate biosynthesis; chorismate biosynthesis; chorismate from D-erythrose 4-phosphate and phosphoenolpyruvate: step 4/7. Involved in the biosynthesis of the chorismate, which leads to the biosynthesis of aromatic amino acids. Catalyzes the reversible NADPH linked reduction of 3-dehydroshikimate (DHSA) to yield shikimate (SA). The sequence is that of Shikimate dehydrogenase (NADP(+)) from Alkaliphilus metalliredigens (strain QYMF).